Reading from the N-terminus, the 323-residue chain is Quinolinate synthase (323 aa).

2 residues coordinate iminosuccinate: H39 and S56. C101 lines the [4Fe-4S] cluster pocket. Residues Y127–N129 and S144 contribute to the iminosuccinate site. Position 187 (C187) interacts with [4Fe-4S] cluster. Iminosuccinate contacts are provided by residues H213–E215 and T230. C280 serves as a coordination point for [4Fe-4S] cluster.

Belongs to the quinolinate synthase family. Type 2 subfamily. [4Fe-4S] cluster is required as a cofactor.

Its subcellular location is the cytoplasm. It carries out the reaction iminosuccinate + dihydroxyacetone phosphate = quinolinate + phosphate + 2 H2O + H(+). Its pathway is cofactor biosynthesis; NAD(+) biosynthesis; quinolinate from iminoaspartate: step 1/1. Its function is as follows. Catalyzes the condensation of iminoaspartate with dihydroxyacetone phosphate to form quinolinate. This is Quinolinate synthase from Chlorobium phaeobacteroides (strain DSM 266 / SMG 266 / 2430).